The following is a 561-amino-acid chain: Transmembrane protein 209 (561 aa).

Ser11 is subject to Phosphoserine. Residues 28–48 traverse the membrane as a helical segment; it reads VVLAWGLLNVSMAGMIYTEMT. Asn57 is a glycosylation site (N-linked (GlcNAc...) asparagine). The chain crosses the membrane as a helical span at residues 60-80; sequence YWPLWYIELALASLFSLNALF. The residue at position 98 (Ser98) is a Phosphoserine. Disordered stretches follow at residues 120–156 and 200–232; these read LAAT…KFAT and SSPY…PTDK. Residues 138-152 are compositionally biased toward low complexity; the sequence is SVLSYSPSRSPSTSP. 2 positions are modified to phosphoserine: Ser201 and Ser248. The disordered stretch occupies residues 250–270; the sequence is EEKQHRVKLGSPDSTSPSTSP. Positions 260–270 are enriched in low complexity; sequence SPDSTSPSTSP. Residue Asn274 is glycosylated (N-linked (GlcNAc...) asparagine). Ser278 carries the post-translational modification Phosphoserine.

As to quaternary structure, interacts with NUP205.

Its subcellular location is the membrane. It is found in the nucleus envelope. The protein resides in the golgi apparatus. It localises to the cytoplasm. Functionally, nuclear envelope protein which in association with NUP205, may be involved in nuclear transport of various nuclear proteins in addition to MYC. The chain is Transmembrane protein 209 (Tmem209) from Mus musculus (Mouse).